A 261-amino-acid chain; its full sequence is Transmembrane and immunoglobulin domain-containing protein 1 (261 aa).

Positions 1 to 26 are cleaved as a signal peptide; that stretch reads MVWKITGPLQACQLLLVVLSLPQGRT. One can recognise an Ig-like C2-type 1 domain in the interval 27–113; the sequence is SSVLTVNGRT…LQRDQTVSVT (87 aa). The Extracellular portion of the chain corresponds to 27–215; the sequence is SSVLTVNGRT…DFHLLVKDKV (189 aa). A disulfide bond links cysteine 53 and cysteine 102. 6 N-linked (GlcNAc...) asparagine glycosylation sites follow: asparagine 57, asparagine 82, asparagine 92, asparagine 117, asparagine 157, and asparagine 189. Residues 121-206 enclose the Ig-like C2-type 2 domain; it reads PPLLSGNGFQ…SSSLKMETMD (86 aa). Cysteine 142 and cysteine 194 are joined by a disulfide. Residues 216–236 traverse the membrane as a helical segment; sequence FVMPAEPIIAACVVVVLTMAF. Residues 237–261 are Cytoplasmic-facing; that stretch reads ALFSRRKRIMKLCGKKNDPNSETAL.

As to quaternary structure, homodimer. Post-translationally, N-glycosylated.

The protein resides in the cell membrane. Its subcellular location is the cytoplasm. Its function is as follows. May control cell-cell adhesion, cell migration and proliferation, cell morphology, and protects renal epithelial cells from oxidative cell injury to promote cell survival. This Mus musculus (Mouse) protein is Transmembrane and immunoglobulin domain-containing protein 1.